The primary structure comprises 214 residues: Outer-membrane lipoprotein carrier protein (214 aa).

The signal sequence occupies residues 1 to 24 (MKIKLAFAVLLALCLSLSVMPVLA).

Belongs to the LolA family. Monomer.

It localises to the periplasm. In terms of biological role, participates in the translocation of lipoproteins from the inner membrane to the outer membrane. Only forms a complex with a lipoprotein if the residue after the N-terminal Cys is not an aspartate (The Asp acts as a targeting signal to indicate that the lipoprotein should stay in the inner membrane). The polypeptide is Outer-membrane lipoprotein carrier protein (Alkalilimnicola ehrlichii (strain ATCC BAA-1101 / DSM 17681 / MLHE-1)).